The following is a 1084-amino-acid chain: Siderophore biosynthesis regulatory protein URBS1 (1084 aa).

Disordered stretches follow at residues 1-164 (MALP…QSSS), 245-283 (AEEHAKMQRYSDEHPRAMNPTSRASYEHESRGMPYRDSY), and 300-337 (RPVHHADSSTNSPQYVPGDVYEHEGSGSPPAAHHAGMR). Residues 23 to 51 (QAAAASSSSSSSSSHHPPPRIAARPIAPA) show a composition bias toward low complexity. Polar residues-rich tracts occupy residues 97-106 (SHHNASSTAT) and 128-141 (RSQSPIAAFRNRSQ). Low complexity predominate over residues 150–164 (PSRSQPNSPLLQSSS). Basic and acidic residues predominate over residues 245 to 260 (AEEHAKMQRYSDEHPR). The GATA-type 1 zinc-finger motif lies at 338–362 (CSNCGVTSTPLWRRAPDGSTICNAC). Disordered stretches follow at residues 372–405 (HRSASNRLSGSDASPPTHEAKLAAAGPSCSREDD) and 442–472 (VSKRESQTSEDPPPARTAERAPPVAEEKMDD). Residues 373–385 (RSASNRLSGSDAS) show a composition bias toward polar residues. The GATA-type 2 zinc-finger motif lies at 482–506 (CTNCQTTTTPLWRRDEDGNNICNAC). 6 disordered regions span residues 559–595 (IAPAAGRNAGDSTPKSTESRRASKKSSLTSEQAMREA), 643–679 (RAGADTARTSHPDDSRSSKRPRQSYPLAPREAYDERD), 692–803 (THAA…TKLS), 841–940 (EAAG…SRRN), 953–1019 (AAVP…DDHW), and 1040–1084 (ARPV…APRT). Basic and acidic residues-rich tracts occupy residues 650–659 (RTSHPDDSRS) and 715–725 (RLGRSELHGES). Positions 752–781 (PHHHHHHHHHHANHASHAVHHGHHHHHHHP) are enriched in basic residues. Residues 875–888 (RGTRSGHDSIKQEA) are compositionally biased toward basic and acidic residues. The segment covering 961 to 970 (SPPSTVSNPA) has biased composition (polar residues). A compositionally biased stretch (low complexity) spans 1070–1084 (PVASSPSQAVSAPRT).

It is found in the nucleus. Its function is as follows. Involved in the regulation of secreted ferrichrome-type siderophores. Acts directly or indirectly to repress the biosynthesis of siderophores. This Mycosarcoma maydis (Corn smut fungus) protein is Siderophore biosynthesis regulatory protein URBS1 (URBS1).